The sequence spans 130 residues: Small ribosomal subunit protein uS8 (130 aa).

Belongs to the universal ribosomal protein uS8 family. In terms of assembly, part of the 30S ribosomal subunit.

One of the primary rRNA binding proteins, it binds directly to 16S rRNA central domain where it helps coordinate assembly of the platform of the 30S subunit. The polypeptide is Small ribosomal subunit protein uS8 (Thermococcus sibiricus (strain DSM 12597 / MM 739)).